The primary structure comprises 295 residues: Protoheme IX farnesyltransferase (295 aa).

A run of 9 helical transmembrane segments spans residues 8–28, 35–55, 83–103, 107–127, 132–152, 162–182, 208–228, 229–249, and 263–283; these read ITKPGIIFGNLISVAGGFFLA, GGLFLATVIGIALVIASGCVF, GVTLAYGGVLGVAGFSVLWFG, LATAFALLGFVVYVGLYSLYL, IYGTLVGSLSGAAPPVVGYCA, LTLLLIFCLWQMPHSYAIAIF, IFWYILAFLGATLMLTLGGYA, GYGYFAVAAAMGLYWLVMALR, and VFIFSIFTITALSIMMSIDFQ.

Belongs to the UbiA prenyltransferase family. Protoheme IX farnesyltransferase subfamily.

The protein localises to the cell inner membrane. It carries out the reaction heme b + (2E,6E)-farnesyl diphosphate + H2O = Fe(II)-heme o + diphosphate. It participates in porphyrin-containing compound metabolism; heme O biosynthesis; heme O from protoheme: step 1/1. Functionally, converts heme B (protoheme IX) to heme O by substitution of the vinyl group on carbon 2 of heme B porphyrin ring with a hydroxyethyl farnesyl side group. The polypeptide is Protoheme IX farnesyltransferase (Chromohalobacter salexigens (strain ATCC BAA-138 / DSM 3043 / CIP 106854 / NCIMB 13768 / 1H11)).